Reading from the N-terminus, the 82-residue chain is Small ribosomal subunit protein bS16 (82 aa).

Belongs to the bacterial ribosomal protein bS16 family.

This Francisella tularensis subsp. holarctica (strain FTNF002-00 / FTA) protein is Small ribosomal subunit protein bS16.